A 315-amino-acid chain; its full sequence is Ribosomal protein L11 methyltransferase (315 aa).

S-adenosyl-L-methionine-binding residues include T164, G185, D207, and N249.

This sequence belongs to the methyltransferase superfamily. PrmA family.

The protein localises to the cytoplasm. It catalyses the reaction L-lysyl-[protein] + 3 S-adenosyl-L-methionine = N(6),N(6),N(6)-trimethyl-L-lysyl-[protein] + 3 S-adenosyl-L-homocysteine + 3 H(+). Methylates ribosomal protein L11. The protein is Ribosomal protein L11 methyltransferase of Lactobacillus johnsonii (strain CNCM I-12250 / La1 / NCC 533).